The sequence spans 302 residues: Putative receptor-like protein 16 (302 aa).

LRR repeat units lie at residues 1–19 (MNLT…LGNM), 20–43 (EMIE…FLKG), and 45–70 (DSLI…NFFS). An LRR 4; degenerate repeat occupies 72–91 (LELSMDNNLFTGKIGRGLQS). 7 LRR repeats span residues 92–115 (LRSL…WFDQ), 116–140 (LQDL…LFNM), 142–164 (SLQL…ISGY), 166–188 (ALKV…LLGK), 190–211 (IIVL…INTQ), 213–234 (IRIL…LCAV), and 235–258 (RSIH…LRNA).

The protein belongs to the RLP family.

This Arabidopsis thaliana (Mouse-ear cress) protein is Putative receptor-like protein 16.